Reading from the N-terminus, the 518-residue chain is 3-phosphoshikimate 1-carboxyvinyltransferase 1, chloroplastic (518 aa).

The N-terminal 74 residues, M1–Q74, are a transit peptide targeting the chloroplast. 3-phosphoshikimate-binding residues include K97, S98, and R102. K97 is a binding site for phosphoenolpyruvate. Residues G175 and R205 each contribute to the phosphoenolpyruvate site. Residues S252, S253, Q254, S280, D405, and K432 each coordinate 3-phosphoshikimate. Residue Q254 participates in phosphoenolpyruvate binding. D405 functions as the Proton acceptor in the catalytic mechanism. Positions 436, 478, and 503 each coordinate phosphoenolpyruvate.

This sequence belongs to the EPSP synthase family.

It is found in the plastid. Its subcellular location is the chloroplast. The catalysed reaction is 3-phosphoshikimate + phosphoenolpyruvate = 5-O-(1-carboxyvinyl)-3-phosphoshikimate + phosphate. The protein operates within metabolic intermediate biosynthesis; chorismate biosynthesis; chorismate from D-erythrose 4-phosphate and phosphoenolpyruvate: step 6/7. Functionally, catalyzes the transfer of the enolpyruvyl moiety of phosphoenolpyruvate (PEP) to the 5-hydroxyl of shikimate-3-phosphate (S3P) to produce enolpyruvyl shikimate-3-phosphate and inorganic phosphate. This Nicotiana tabacum (Common tobacco) protein is 3-phosphoshikimate 1-carboxyvinyltransferase 1, chloroplastic (EPSPS-1).